A 289-amino-acid polypeptide reads, in one-letter code: ATP synthase gamma chain (289 aa).

The protein belongs to the ATPase gamma chain family. In terms of assembly, F-type ATPases have 2 components, CF(1) - the catalytic core - and CF(0) - the membrane proton channel. CF(1) has five subunits: alpha(3), beta(3), gamma(1), delta(1), epsilon(1). CF(0) has three main subunits: a, b and c.

The protein resides in the cell inner membrane. In terms of biological role, produces ATP from ADP in the presence of a proton gradient across the membrane. The gamma chain is believed to be important in regulating ATPase activity and the flow of protons through the CF(0) complex. This Histophilus somni (strain 129Pt) (Haemophilus somnus) protein is ATP synthase gamma chain.